The sequence spans 250 residues: Non-specific acid phosphatase (250 aa).

The signal sequence occupies residues 1–20 (MKSRYLVFFLPLIVAKYTSA).

This sequence belongs to the class A bacterial acid phosphatase family. As to quaternary structure, homodimer.

It localises to the periplasm. It carries out the reaction a phosphate monoester + H2O = an alcohol + phosphate. The chain is Non-specific acid phosphatase (phoN) from Salmonella typhimurium (strain LT2 / SGSC1412 / ATCC 700720).